The sequence spans 200 residues: Ras-related protein Rab-10 (200 aa).

11 residues coordinate GTP: S18, G19, V20, G21, K22, T23, C24, N35, T36, S40, and T41. T23 is a Mg(2+) binding site. 2 consecutive short sequence motifs (switch) follow at residues 32–46 (DAFN…EIDF) and 64–81 (DTAG…YYRG). T41 and D64 together coordinate Mg(2+). GTP is bound at residue G67. A Phosphothreonine modification is found at T73. At K102 the chain carries N6-acetyllysine. K102 participates in a covalent cross-link: Glycyl lysine isopeptide (Lys-Gly) (interchain with G-Cter in ubiquitin). GTP-binding residues include N122, K123, D125, and M126. K136 participates in a covalent cross-link: Glycyl lysine isopeptide (Lys-Gly) (interchain with G-Cter in ubiquitin). The GTP site is built by S152, A153, and K154. K154 is covalently cross-linked (Glycyl lysine isopeptide (Lys-Gly) (interchain with G-Cter in ubiquitin)). S-geranylgeranyl cysteine attachment occurs at residues C199 and C200.

It belongs to the small GTPase superfamily. Rab family. In terms of assembly, interacts with MYO5A; mediates the transport to the plasma membrane of SLC2A4/GLUT4 storage vesicles. Interacts with GDI1 and with GDI2; negatively regulates RAB10 association with membranes and activation. Interacts (GDP-bound form) with LLGL1; the interaction is direct and promotes RAB10 association with membranes and activation through competition with the Rab inhibitor GDI1. Interacts with EXOC4; probably associates with the exocyst. Interacts (GTP-bound form) with MICALCL, MICAL1, MICAL3, EHBP1 and EHBP1L1; at least in case of MICAL1 two molecules of RAB10 can bind to one molecule of MICAL1. Interacts with TBC1D13. Interacts with SEC16A. Interacts with CHM. Interacts with LRRK2; interaction facilitates phosphorylation of Thr-73. Interacts with RILPL1 and RILPL2 when phosphorylated on Thr-73. Interacts with TBC1D21. Interacts with MARCKS. Requires Mg(2+) as cofactor. Post-translationally, phosphorylation of Thr-73 in the switch II region by LRRK2 prevents the association of RAB regulatory proteins, including CHM and RAB GDP dissociation inhibitors GDI1 and GDI2. Phosphorylation of Thr-73 by LRRK2 is stimulated by RAB29 and RAB32. Phosphorylation by LRRK2 is required for localization to stressed lysosomes. Highest levels in neural and muscle tissues.

The protein localises to the cytoplasmic vesicle membrane. It localises to the golgi apparatus. The protein resides in the trans-Golgi network membrane. It is found in the endosome membrane. Its subcellular location is the recycling endosome membrane. The protein localises to the cytoplasmic vesicle. It localises to the phagosome membrane. The protein resides in the cell projection. It is found in the cilium. Its subcellular location is the endoplasmic reticulum membrane. The protein localises to the cytoplasm. It localises to the perinuclear region. The protein resides in the lysosome. It catalyses the reaction GTP + H2O = GDP + phosphate + H(+). With respect to regulation, regulated by guanine nucleotide exchange factors (GEFs) DENND4C and RABIF which promote the exchange of bound GDP for free GTP. Regulated by GTPase activating proteins (GAPs) including TBC1D21 which increase the GTP hydrolysis activity. Inhibited by GDP dissociation inhibitors GDI1 and GDI2 which prevent Rab-GDP dissociation. Its function is as follows. The small GTPases Rab are key regulators of intracellular membrane trafficking, from the formation of transport vesicles to their fusion with membranes. Rabs cycle between an inactive GDP-bound form and an active GTP-bound form that is able to recruit to membranes different set of downstream effectors directly responsible for vesicle formation, movement, tethering and fusion. That Rab is mainly involved in the biosynthetic transport of proteins from the Golgi to the plasma membrane. Regulates, for instance, SLC2A4/GLUT4 glucose transporter-enriched vesicles delivery to the plasma membrane. In parallel, it regulates the transport of TLR4, a toll-like receptor to the plasma membrane and therefore may be important for innate immune response. Also plays a specific role in asymmetric protein transport to the plasma membrane. In neurons, it is involved in axonogenesis through regulation of vesicular membrane trafficking toward the axonal plasma membrane. In epithelial cells, it regulates transport from the Golgi to the basolateral membrane. May play a role in the basolateral recycling pathway and in phagosome maturation. May play a role in endoplasmic reticulum dynamics and morphology controlling tubulation along microtubules and tubules fusion. Together with LRRK2, RAB8A, and RILPL1, it regulates ciliogenesis. When phosphorylated by LRRK2 on Thr-73, it binds RILPL1 and inhibits ciliogenesis. Participates in the export of a subset of neosynthesized proteins through a Rab8-Rab10-Rab11-dependent endososomal export route. Targeted to and stabilized on stressed lysosomes through LRRK2 phosphorylation where it promotes the extracellular release of lysosomal content through EHBP1 and EHNP1L1 effector proteins. The protein is Ras-related protein Rab-10 of Rattus norvegicus (Rat).